An 889-amino-acid polypeptide reads, in one-letter code: DNA mismatch repair protein MutS (889 aa).

ATP is bound at residue 620-627 (GPNMAGKS). The interval 812–831 (AAAPSGAARRGRPAREKEPG) is disordered.

The protein belongs to the DNA mismatch repair MutS family.

This protein is involved in the repair of mismatches in DNA. It is possible that it carries out the mismatch recognition step. This protein has a weak ATPase activity. The sequence is that of DNA mismatch repair protein MutS from Syntrophobacter fumaroxidans (strain DSM 10017 / MPOB).